Here is a 552-residue protein sequence, read N- to C-terminus: N-acetylglucosamine-6-sulfatase (552 aa).

The signal sequence occupies residues 1 to 36 (MRLLPLAPGRLRRGSPRHLPSCSPALLLLVLGGCLG). The Ca(2+) site is built by aspartate 55, aspartate 56, and cysteine 91. Residue cysteine 91 is the Nucleophile of the active site. Cysteine 91 is subject to 3-oxoalanine (Cys). 7 N-linked (GlcNAc...) asparagine glycosylation sites follow: asparagine 111, asparagine 117, asparagine 183, asparagine 198, asparagine 210, asparagine 279, and asparagine 317. Ca(2+)-binding residues include aspartate 326 and asparagine 327. Asparagine 362, asparagine 387, asparagine 405, asparagine 422, asparagine 449, and asparagine 480 each carry an N-linked (GlcNAc...) asparagine glycan. The residue at position 541 (serine 541) is a Phosphoserine.

Belongs to the sulfatase family. Ca(2+) is required as a cofactor. In terms of processing, the form A (78 kDa) is processed by internal peptidase cleavage to a 32 kDa N-terminal species (form B) and a 48 kDa C-terminal species. The conversion to 3-oxoalanine (also known as C-formylglycine, FGly), of a serine or cysteine residue in prokaryotes and of a cysteine residue in eukaryotes, is critical for catalytic activity.

Its subcellular location is the lysosome. It carries out the reaction Hydrolysis of the 6-sulfate groups of the N-acetyl-D-glucosamine 6-sulfate units of heparan sulfate and keratan sulfate.. In terms of biological role, hydrolyzes 6-sulfate groups in N-acetyl-d-glucosaminide units of heparin sulfate and keratan sulfate. The protein is N-acetylglucosamine-6-sulfatase (GNS) of Homo sapiens (Human).